Reading from the N-terminus, the 1108-residue chain is Ubiquitin carboxyl-terminal hydrolase 5 (1108 aa).

Residues 55 to 187 form the MATH domain; sequence FQRFTWHIKS…DGALLLTAYV (133 aa). Active-site nucleophile residues include cysteine 120 and cysteine 222. Residues 213 to 528 enclose the USP domain; the sequence is VGLKNQGATC…SAYMLLYLRK (316 aa). Residue histidine 464 is the Proton acceptor of the active site.

The protein belongs to the peptidase C19 family.

Its subcellular location is the nucleus. It catalyses the reaction Thiol-dependent hydrolysis of ester, thioester, amide, peptide and isopeptide bonds formed by the C-terminal Gly of ubiquitin (a 76-residue protein attached to proteins as an intracellular targeting signal).. Its function is as follows. Hydrolase that deubiquitinates target proteins. Cleaves the UBL propeptide in sde2. The chain is Ubiquitin carboxyl-terminal hydrolase 5 (ubp5) from Schizosaccharomyces pombe (strain 972 / ATCC 24843) (Fission yeast).